The sequence spans 246 residues: 4-hydroxy-tetrahydrodipicolinate reductase (246 aa).

NAD(+)-binding positions include 8-13, 74-76, and 101-104; these read GAKGRM, GTT, and APNF. The Proton donor/acceptor role is filled by H131. (S)-2,3,4,5-tetrahydrodipicolinate is bound at residue H132. The active-site Proton donor is K135. A (S)-2,3,4,5-tetrahydrodipicolinate-binding site is contributed by 141–142; it reads GT.

This sequence belongs to the DapB family.

The protein localises to the cytoplasm. It catalyses the reaction (S)-2,3,4,5-tetrahydrodipicolinate + NAD(+) + H2O = (2S,4S)-4-hydroxy-2,3,4,5-tetrahydrodipicolinate + NADH + H(+). The enzyme catalyses (S)-2,3,4,5-tetrahydrodipicolinate + NADP(+) + H2O = (2S,4S)-4-hydroxy-2,3,4,5-tetrahydrodipicolinate + NADPH + H(+). The protein operates within amino-acid biosynthesis; L-lysine biosynthesis via DAP pathway; (S)-tetrahydrodipicolinate from L-aspartate: step 4/4. Its function is as follows. Catalyzes the conversion of 4-hydroxy-tetrahydrodipicolinate (HTPA) to tetrahydrodipicolinate. The protein is 4-hydroxy-tetrahydrodipicolinate reductase of Cutibacterium acnes (strain DSM 16379 / KPA171202) (Propionibacterium acnes).